A 26-amino-acid polypeptide reads, in one-letter code: Dermaseptin-J3 (26 aa).

Val26 carries the post-translational modification Valine amide.

Expressed by the skin glands.

The protein resides in the secreted. Functionally, has antimicrobial activity. This chain is Dermaseptin-J3, found in Phasmahyla jandaia (Jandaia leaf frog).